The sequence spans 99 residues: Nucleoid-associated protein Cj1642 (99 aa).

The protein belongs to the YbaB/EbfC family. In terms of assembly, homodimer.

It is found in the cytoplasm. It localises to the nucleoid. Functionally, binds to DNA and alters its conformation. May be involved in regulation of gene expression, nucleoid organization and DNA protection. The chain is Nucleoid-associated protein Cj1642 from Campylobacter jejuni subsp. jejuni serotype O:2 (strain ATCC 700819 / NCTC 11168).